The chain runs to 296 residues: Claudin-23 (296 aa).

Residues M1–R2 are Cytoplasmic-facing. Residues T3–V23 form a helical membrane-spanning segment. The Extracellular segment spans residues S24–R81. The chain crosses the membrane as a helical span at residues G82 to V102. At R103–Y111 the chain is on the cytoplasmic side. A helical membrane pass occupies residues G112 to V132. The Extracellular portion of the chain corresponds to S133–L160. The helical transmembrane segment at V161–F181 threads the bilayer. Topologically, residues A182–L296 are cytoplasmic. The interval Y224 to L296 is disordered. Over residues T273–R284 the composition is skewed to low complexity. Residues P285–L296 are compositionally biased toward polar residues.

Belongs to the claudin family.

It localises to the cell junction. It is found in the tight junction. Its subcellular location is the cell membrane. Plays a major role in tight junction-specific obliteration of the intercellular space, through calcium-independent cell-adhesion activity. In Mus musculus (Mouse), this protein is Claudin-23 (Cldn23).